A 288-amino-acid polypeptide reads, in one-letter code: Proteasome subunit beta (288 aa).

The propeptide at 1-57 (MTAGDPMRLHPGHALSSFTEHLRALAPELLGPNRFAALDGATGSSGGTGAKDIAPHG) is removed in mature form; by autocatalysis. The Nucleophile role is filled by T58.

This sequence belongs to the peptidase T1B family. In terms of assembly, the 20S proteasome core is composed of 14 alpha and 14 beta subunits that assemble into four stacked heptameric rings, resulting in a barrel-shaped structure. The two inner rings, each composed of seven catalytic beta subunits, are sandwiched by two outer rings, each composed of seven alpha subunits. The catalytic chamber with the active sites is on the inside of the barrel. Has a gated structure, the ends of the cylinder being occluded by the N-termini of the alpha-subunits. Is capped by the proteasome-associated ATPase, ARC.

It localises to the cytoplasm. The enzyme catalyses Cleavage of peptide bonds with very broad specificity.. The protein operates within protein degradation; proteasomal Pup-dependent pathway. With respect to regulation, the formation of the proteasomal ATPase ARC-20S proteasome complex, likely via the docking of the C-termini of ARC into the intersubunit pockets in the alpha-rings, may trigger opening of the gate for substrate entry. Interconversion between the open-gate and close-gate conformations leads to a dynamic regulation of the 20S proteasome proteolysis activity. In terms of biological role, component of the proteasome core, a large protease complex with broad specificity involved in protein degradation. The chain is Proteasome subunit beta from Nocardia farcinica (strain IFM 10152).